The primary structure comprises 291 residues: Protease HtpX homolog (291 aa).

2 consecutive transmembrane segments (helical) span residues 4–24 (IVLFLLTNFAVILVLSISARL) and 38–58 (MGMLLAFAALIGFGGSFISLM). H144 provides a ligand contact to Zn(2+). The active site involves E145. Zn(2+) is bound at residue H148. 2 helical membrane passes run 152-172 (GDMVTLTLIQGVVNTFVIFLA) and 199-219 (VSSIAFEIMFGILASIVVMFF). E224 is a binding site for Zn(2+).

It belongs to the peptidase M48B family. It depends on Zn(2+) as a cofactor.

The protein localises to the cell inner membrane. This Prosthecochloris aestuarii (strain DSM 271 / SK 413) protein is Protease HtpX homolog.